Reading from the N-terminus, the 310-residue chain is Receptor homology region, transmembrane domain- and RING domain-containing protein 1 (310 aa).

The first 25 residues, 1–25 (MRLVVSSCLLVAAPFLSSLLRVSLA), serve as a signal peptide directing secretion. The Lumenal segment spans residues 26 to 168 (TVVLNSISAS…NPPDRGSAWT (143 aa)). An intrachain disulfide couples C65 to C92. N-linked (GlcNAc...) asparagine glycosylation occurs at N75. One can recognise a PA domain in the interval 81–149 (TTKFALIIRG…VAGEILRKYA (69 aa)). The chain crosses the membrane as a helical span at residues 169 to 189 (VLAISFFSLLLIVTFLLIAFF). The Cytoplasmic segment spans residues 190 to 310 (APRHWTQWRG…FAFAQSSQSR (121 aa)). The RING-type; atypical zinc-finger motif lies at 232-274 (CAICLEDYRFGESLRLLPCQHAFHLNCIDSWLTKWGTSCPVCK). A compositionally biased stretch (basic and acidic residues) spans 284–293 (SEVHKRESPR). The segment at 284 to 310 (SEVHKRESPRTDTSTSRFAFAQSSQSR) is disordered. Polar residues predominate over residues 294-310 (TDTSTSRFAFAQSSQSR).

As to expression, expressed in leaves, stems, flowers and siliques.

It is found in the prevacuolar compartment membrane. Its subcellular location is the protein storage vacuole membrane. The protein localises to the golgi apparatus membrane. Its function is as follows. Involved in the trafficking of vacuolar proteins. Functions probably as a sorting receptor for protein trafficking to the protein storage vacuole (PSV) by binding the C-terminal vacuolar sorting determinant (VSD) of vacuolar-sorted proteins. In Arabidopsis thaliana (Mouse-ear cress), this protein is Receptor homology region, transmembrane domain- and RING domain-containing protein 1 (RMR1).